Reading from the N-terminus, the 160-residue chain is Conopressin/conophysin, isoform 2 (160 aa).

An N-terminal signal peptide occupies residues 1-30; the sequence is MKCSVLQMSRLSWAMCLMLLMLLLLGTAQG. The cysteines at positions 31 and 36 are disulfide-linked. Gly39 carries the glycine amide modification. Residues 40–47 constitute a propeptide that is removed on maturation; sequence GKRAVDAL. Disulfide bonds link Cys53/Cys97, Cys56/Cys70, Cys64/Cys87, Cys71/Cys77, Cys104/Cys118, Cys112/Cys130, and Cys119/Cys124.

This sequence belongs to the vasopressin/oxytocin family. Expressed by the venom gland.

It is found in the secreted. Targets vasopressin-oxytocin related receptors. The protein is Conopressin/conophysin, isoform 2 of Conus monile (Necklace cone).